The sequence spans 324 residues: MKPLSARQQQVLQATVHHYVDTMEPVGSRTLVQRFGIPASSATVRSAMGALEKRGLLTQPHTSAGRIPSALGYRCYVDDLLPEPGVAVQHLERELTGLSLRWAALDDLLQQLARRLTDFTGLMSLITRPQQPRAQLEAIRLVQSGDRLLVMLVEDSGRASHLNLRLPPGASDELTAIERWTDQQLEDGSINWRSLPPQLQRSGDVLRSALDHPSMSPETPLVVHGLSRLVAEPEFHSTAELRPLLELIDDQPCAVVSATDQPGVWIGEEHPQKALQACSVVQAPYRCGQEGVGQVALVGPMRMAYATAHAAVQRVARHLDLLLN.

This sequence belongs to the HrcA family.

Functionally, negative regulator of class I heat shock genes (grpE-dnaK-dnaJ and groELS operons). Prevents heat-shock induction of these operons. The chain is Heat-inducible transcription repressor HrcA from Parasynechococcus marenigrum (strain WH8102).